The primary structure comprises 530 residues: Type 2 DNA topoisomerase 6 subunit B (530 aa).

ATP contacts are provided by residues asparagine 42, aspartate 76, 97-98 (SK), 106-113 (GMYGLGVK), and lysine 427.

This sequence belongs to the TOP6B family. As to quaternary structure, homodimer. Heterotetramer of two Top6A and two Top6B chains.

The catalysed reaction is ATP-dependent breakage, passage and rejoining of double-stranded DNA.. Functionally, relaxes both positive and negative superturns and exhibits a strong decatenase activity. This is Type 2 DNA topoisomerase 6 subunit B from Saccharolobus islandicus (strain M.16.4 / Kamchatka #3) (Sulfolobus islandicus).